Consider the following 431-residue polypeptide: Trigger factor (431 aa).

One can recognise a PPIase FKBP-type domain in the interval 165-250 (GDTVVIDFDG…IHELKRKELP (86 aa)).

It belongs to the FKBP-type PPIase family. Tig subfamily.

The protein resides in the cytoplasm. The enzyme catalyses [protein]-peptidylproline (omega=180) = [protein]-peptidylproline (omega=0). Functionally, involved in protein export. Acts as a chaperone by maintaining the newly synthesized protein in an open conformation. Functions as a peptidyl-prolyl cis-trans isomerase. In Leuconostoc citreum (strain KM20), this protein is Trigger factor.